Consider the following 401-residue polypeptide: Chorismate synthase (401 aa).

NADP(+) contacts are provided by R40 and R46. Residues 135–137 (RAS), 256–257 (QA), G300, 315–319 (KPIST), and R341 each bind FMN.

It belongs to the chorismate synthase family. Homotetramer. The cofactor is FMNH2.

The catalysed reaction is 5-O-(1-carboxyvinyl)-3-phosphoshikimate = chorismate + phosphate. The protein operates within metabolic intermediate biosynthesis; chorismate biosynthesis; chorismate from D-erythrose 4-phosphate and phosphoenolpyruvate: step 7/7. Catalyzes the anti-1,4-elimination of the C-3 phosphate and the C-6 proR hydrogen from 5-enolpyruvylshikimate-3-phosphate (EPSP) to yield chorismate, which is the branch point compound that serves as the starting substrate for the three terminal pathways of aromatic amino acid biosynthesis. This reaction introduces a second double bond into the aromatic ring system. This chain is Chorismate synthase, found in Mycobacterium bovis (strain BCG / Pasteur 1173P2).